Consider the following 280-residue polypeptide: L-aspartate dehydrogenase (280 aa).

The NAD(+) site is built by Ala134 and Asn202. Residue His232 is part of the active site.

This sequence belongs to the L-aspartate dehydrogenase family.

The enzyme catalyses L-aspartate + NADP(+) + H2O = oxaloacetate + NH4(+) + NADPH + H(+). It carries out the reaction L-aspartate + NAD(+) + H2O = oxaloacetate + NH4(+) + NADH + H(+). It participates in cofactor biosynthesis; NAD(+) biosynthesis; iminoaspartate from L-aspartate (dehydrogenase route): step 1/1. Its function is as follows. Specifically catalyzes the NAD or NADP-dependent dehydrogenation of L-aspartate to iminoaspartate. This chain is L-aspartate dehydrogenase, found in Bradyrhizobium diazoefficiens (strain JCM 10833 / BCRC 13528 / IAM 13628 / NBRC 14792 / USDA 110).